The sequence spans 331 residues: MAQSPPPAVVTVTGAAGSIGYASLFRIAAGEMLGPDTPIRLRLLEIPSAVSAAEGTAMELDDSAFPLLRDIEVHDDPKRGFDGTDVALLIGSRPRSKGMERGDLLAANGQIFTVQGRALNQVAADGVRVLVVGNPANTNALVAANNAPDIPAERFTALTRLDHNRAIAQLARHSGAAVKDIRRVAIWGNHSSTQYPDIFHARVGDRSGAEFAADREWLTGDFIPTVANRGSAIIEARGASSAASAANAAIDHVHDWVLGTPDDDWTSVALPSTGAYGVPEGLVSSFPVRSVDGSWQIVDGLEIDDFSRKLIDASVGELESERDAVRGMGFI.

14–20 (GAAGSIG) provides a ligand contact to NAD(+). Residues R95 and R101 each contribute to the substrate site. Residues N108, Q115, and 132–134 (VGN) contribute to the NAD(+) site. Residues N134 and R165 each coordinate substrate. H190 acts as the Proton acceptor in catalysis.

The protein belongs to the LDH/MDH superfamily. MDH type 2 family.

It carries out the reaction (S)-malate + NAD(+) = oxaloacetate + NADH + H(+). Its function is as follows. Catalyzes the reversible oxidation of malate to oxaloacetate. In Rhodococcus jostii (strain RHA1), this protein is Malate dehydrogenase.